Consider the following 65-residue polypeptide: Putative antitoxin MJECL31 (65 aa).

It belongs to the UPF0165 family.

Its function is as follows. Possibly the antitoxin component of a type II toxin-antitoxin (TA) system. The polypeptide is Putative antitoxin MJECL31 (Methanocaldococcus jannaschii (strain ATCC 43067 / DSM 2661 / JAL-1 / JCM 10045 / NBRC 100440) (Methanococcus jannaschii)).